Here is an 81-residue protein sequence, read N- to C-terminus: Photosystem I iron-sulfur center (81 aa).

2 4Fe-4S ferredoxin-type domains span residues 2–31 (SHSV…MVPW) and 39–68 (IASS…IRVY). [4Fe-4S] cluster-binding residues include Cys-11, Cys-14, Cys-17, Cys-21, Cys-48, Cys-51, Cys-54, and Cys-58.

The cyanobacterial PSI reaction center is composed of one copy each of PsaA,B,C,D,E,F,I,J,K,L,M and X, and forms trimeric complexes. [4Fe-4S] cluster serves as cofactor.

Its subcellular location is the cellular thylakoid membrane. It carries out the reaction reduced [plastocyanin] + hnu + oxidized [2Fe-2S]-[ferredoxin] = oxidized [plastocyanin] + reduced [2Fe-2S]-[ferredoxin]. Its function is as follows. Apoprotein for the two 4Fe-4S centers FA and FB of photosystem I (PSI); essential for photochemical activity. FB is the terminal electron acceptor of PSI, donating electrons to ferredoxin. The C-terminus interacts with PsaA/B/D and helps assemble the protein into the PSI complex. Required for binding of PsaD and PsaE to PSI. PSI is a plastocyanin/cytochrome c6-ferredoxin oxidoreductase, converting photonic excitation into a charge separation, which transfers an electron from the donor P700 chlorophyll pair to the spectroscopically characterized acceptors A0, A1, FX, FA and FB in turn. Mutant proteins with a 3Fe-4S center are unable to reconstitute PSI activity in vivo. The chain is Photosystem I iron-sulfur center from Synechocystis sp. (strain ATCC 27184 / PCC 6803 / Kazusa).